The chain runs to 111 residues: Large ribosomal subunit protein uL23 (111 aa).

It belongs to the universal ribosomal protein uL23 family. As to quaternary structure, part of the 50S ribosomal subunit. Contacts protein L29, and trigger factor when it is bound to the ribosome.

One of the early assembly proteins it binds 23S rRNA. One of the proteins that surrounds the polypeptide exit tunnel on the outside of the ribosome. Forms the main docking site for trigger factor binding to the ribosome. This Chlamydia muridarum (strain MoPn / Nigg) protein is Large ribosomal subunit protein uL23.